Reading from the N-terminus, the 495-residue chain is Maintenance of mitochondrial morphology protein 1 (495 aa).

Over 1-22 the chain is Lumenal; the sequence is MALQQHEPAPFAPQSSLSFTQG. The chain crosses the membrane as a helical span at residues 23-43; the sequence is FLLGQLSVVLLIGAFIKFFIF. The Cytoplasmic portion of the chain corresponds to 44 to 495; that stretch reads GEAPPPPSRG…PVGTPGIPDN (452 aa). 4 disordered regions span residues 63-94, 269-320, 382-428, and 440-495; these read YSSVYSPPQDSQKSLREKPSTSNVLRPVPSTS, ASTE…SPKS, WPRM…EPEG, and GLGA…IPDN. 2 stretches are compositionally biased toward polar residues: residues 65-74 and 82-94; these read SVYSPPQDSQ and STSNVLRPVPSTS. One can recognise an SMP-LTD domain in the interval 128–379; it reads QPESLDWFNV…EPRVQVVGLP (252 aa). Positions 271–289 are enriched in pro residues; sequence TEPPEPLQTPAGSPAPPTS. The span at 418–428 shows a compositional bias: basic and acidic residues; sequence FSDDHGREPEG. Over residues 458 to 469 the composition is skewed to polar residues; that stretch reads RSSSMTRQQSGG.

Belongs to the MMM1 family. Homodimer. Component of the ER-mitochondria encounter structure (ERMES) or MDM complex, composed of mmm1, mdm10, mdm12 and mdm34. An MMM1 homodimer associates with one molecule of mdm12 on each side in a pairwise head-to-tail manner, and the SMP-LTD domains of mmm1 and mdm12 generate a continuous hydrophobic tunnel for phospholipid trafficking.

The protein resides in the endoplasmic reticulum membrane. In terms of biological role, component of the ERMES/MDM complex, which serves as a molecular tether to connect the endoplasmic reticulum (ER) and mitochondria. Components of this complex are involved in the control of mitochondrial shape and protein biogenesis, and function in nonvesicular lipid trafficking between the ER and mitochondria. The mdm12-mmm1 subcomplex functions in the major beta-barrel assembly pathway that is responsible for biogenesis of all outer membrane beta-barrel proteins, and acts in a late step after the SAM complex. The mdm10-mdm12-mmm1 subcomplex further acts in the TOM40-specific pathway after the action of the mdm12-mmm1 complex. Essential for establishing and maintaining the structure of mitochondria and maintenance of mtDNA nucleoids. The sequence is that of Maintenance of mitochondrial morphology protein 1 from Penicillium rubens (strain ATCC 28089 / DSM 1075 / NRRL 1951 / Wisconsin 54-1255) (Penicillium chrysogenum).